Reading from the N-terminus, the 309-residue chain is MFPDLAADLKAAMPDLRGRLLGNEPLAPLTWFRVGGPAQVLFTPADEDDLGYFLSLLPAEVPVLCIGVGSNLIVRDGGLPGVVIRLAPRGFGEARSDGETVHAGAAALDKRVAETAAAAQLGGLEFYFGIPGTIGGALRMNAGANGRETRDVLIDATAVDRAGRRHVIDLAGMQFSYRSSGADPSLIFTSARFRGTPASPDAIRAKMNEVQAHRELAQPIREKTGGSTFKNPPGHSAWKLIDAAGCRGLRIGGAQVSEMHCNFLINIGDATAADIETLGETVRERVKAQSGIELQWEIKRIGVTAGIAG.

An FAD-binding PCMH-type domain is found at 33–198; it reads RVGGPAQVLF…TSARFRGTPA (166 aa). Residue arginine 178 is part of the active site. The Proton donor role is filled by serine 227. Glutamate 297 is a catalytic residue.

Belongs to the MurB family. It depends on FAD as a cofactor.

Its subcellular location is the cytoplasm. It carries out the reaction UDP-N-acetyl-alpha-D-muramate + NADP(+) = UDP-N-acetyl-3-O-(1-carboxyvinyl)-alpha-D-glucosamine + NADPH + H(+). The protein operates within cell wall biogenesis; peptidoglycan biosynthesis. In terms of biological role, cell wall formation. This Rhodopseudomonas palustris (strain HaA2) protein is UDP-N-acetylenolpyruvoylglucosamine reductase.